Here is a 474-residue protein sequence, read N- to C-terminus: ATP synthase subunit beta (474 aa).

Gly-153–Thr-160 is a binding site for ATP.

The protein belongs to the ATPase alpha/beta chains family. F-type ATPases have 2 components, CF(1) - the catalytic core - and CF(0) - the membrane proton channel. CF(1) has five subunits: alpha(3), beta(3), gamma(1), delta(1), epsilon(1). CF(0) has three main subunits: a(1), b(2) and c(9-12). The alpha and beta chains form an alternating ring which encloses part of the gamma chain. CF(1) is attached to CF(0) by a central stalk formed by the gamma and epsilon chains, while a peripheral stalk is formed by the delta and b chains.

The protein resides in the cell inner membrane. It carries out the reaction ATP + H2O + 4 H(+)(in) = ADP + phosphate + 5 H(+)(out). Functionally, produces ATP from ADP in the presence of a proton gradient across the membrane. The catalytic sites are hosted primarily by the beta subunits. The protein is ATP synthase subunit beta of Rickettsia prowazekii (strain Madrid E).